The primary structure comprises 229 residues: Glutathione S-transferase 1 (229 aa).

The region spanning 2-83 is the GST N-terminal domain; the sequence is SPVKVFGHPM…YILRKYGGTA (82 aa). Residues 41 to 42, 54 to 55, and 67 to 68 contribute to the glutathione site; these read HK, KM, and ES. A GST C-terminal domain is found at 93-223; sequence GIEELAMVDV…RVCKHMPTEF (131 aa).

The protein belongs to the GST superfamily. Phi family.

The catalysed reaction is RX + glutathione = an S-substituted glutathione + a halide anion + H(+). Its function is as follows. Conjugation of reduced glutathione to a wide number of exogenous and endogenous hydrophobic electrophiles. This chain is Glutathione S-transferase 1 (GSTA1), found in Triticum aestivum (Wheat).